The primary structure comprises 335 residues: Holliday junction branch migration complex subunit RuvB (335 aa).

A large ATPase domain (RuvB-L) region spans residues 1-183; sequence MDERIISSET…FGVIDHLEFY (183 aa). Residues leucine 22, arginine 23, glycine 64, lysine 67, threonine 68, threonine 69, 130–132, arginine 173, tyrosine 183, and arginine 220 each bind ATP; that span reads EDY. Threonine 68 provides a ligand contact to Mg(2+). The interval 184-254 is small ATPAse domain (RuvB-S); the sequence is TEEQLTEIVL…LAKEALTLLQ (71 aa). Residues 257 to 335 form a head domain (RuvB-H) region; the sequence is PRGLDTIDQK…HLGISYEKEV (79 aa). 3 residues coordinate DNA: arginine 293, arginine 312, and arginine 317.

The protein belongs to the RuvB family. In terms of assembly, homohexamer. Forms an RuvA(8)-RuvB(12)-Holliday junction (HJ) complex. HJ DNA is sandwiched between 2 RuvA tetramers; dsDNA enters through RuvA and exits via RuvB. An RuvB hexamer assembles on each DNA strand where it exits the tetramer. Each RuvB hexamer is contacted by two RuvA subunits (via domain III) on 2 adjacent RuvB subunits; this complex drives branch migration. In the full resolvosome a probable DNA-RuvA(4)-RuvB(12)-RuvC(2) complex forms which resolves the HJ.

Its subcellular location is the cytoplasm. The enzyme catalyses ATP + H2O = ADP + phosphate + H(+). The RuvA-RuvB-RuvC complex processes Holliday junction (HJ) DNA during genetic recombination and DNA repair, while the RuvA-RuvB complex plays an important role in the rescue of blocked DNA replication forks via replication fork reversal (RFR). RuvA specifically binds to HJ cruciform DNA, conferring on it an open structure. The RuvB hexamer acts as an ATP-dependent pump, pulling dsDNA into and through the RuvAB complex. RuvB forms 2 homohexamers on either side of HJ DNA bound by 1 or 2 RuvA tetramers; 4 subunits per hexamer contact DNA at a time. Coordinated motions by a converter formed by DNA-disengaged RuvB subunits stimulates ATP hydrolysis and nucleotide exchange. Immobilization of the converter enables RuvB to convert the ATP-contained energy into a lever motion, pulling 2 nucleotides of DNA out of the RuvA tetramer per ATP hydrolyzed, thus driving DNA branch migration. The RuvB motors rotate together with the DNA substrate, which together with the progressing nucleotide cycle form the mechanistic basis for DNA recombination by continuous HJ branch migration. Branch migration allows RuvC to scan DNA until it finds its consensus sequence, where it cleaves and resolves cruciform DNA. This chain is Holliday junction branch migration complex subunit RuvB, found in Listeria innocua serovar 6a (strain ATCC BAA-680 / CLIP 11262).